The following is a 292-amino-acid chain: NAD kinase (292 aa).

Catalysis depends on D73, which acts as the Proton acceptor. NAD(+) is bound by residues D73–G74, N147–E148, H158, R175, D177, T188–S193, and Q247.

The protein belongs to the NAD kinase family. A divalent metal cation serves as cofactor.

Its subcellular location is the cytoplasm. It carries out the reaction NAD(+) + ATP = ADP + NADP(+) + H(+). Involved in the regulation of the intracellular balance of NAD and NADP, and is a key enzyme in the biosynthesis of NADP. Catalyzes specifically the phosphorylation on 2'-hydroxyl of the adenosine moiety of NAD to yield NADP. The sequence is that of NAD kinase from Salmonella agona (strain SL483).